A 172-amino-acid chain; its full sequence is Adenine phosphoribosyltransferase (172 aa).

It belongs to the purine/pyrimidine phosphoribosyltransferase family. As to quaternary structure, homodimer.

The protein localises to the cytoplasm. It catalyses the reaction AMP + diphosphate = 5-phospho-alpha-D-ribose 1-diphosphate + adenine. It functions in the pathway purine metabolism; AMP biosynthesis via salvage pathway; AMP from adenine: step 1/1. Its function is as follows. Catalyzes a salvage reaction resulting in the formation of AMP, that is energically less costly than de novo synthesis. This is Adenine phosphoribosyltransferase from Staphylococcus epidermidis (strain ATCC 35984 / DSM 28319 / BCRC 17069 / CCUG 31568 / BM 3577 / RP62A).